We begin with the raw amino-acid sequence, 1146 residues long: Sodium/hydrogen exchanger 7 (1146 aa).

At 1 to 28 (MTTVIDATMAYRFLEEATDSSSSSSSSK) the chain is on the extracellular side. The chain crosses the membrane as a helical span at residues 29–49 (LESSPVDAVLFVGMSLVLGIA). At 50 to 58 (SRHLLRGTR) the chain is on the cytoplasmic side. Residues 59–79 (VPYTVALLVIGIALGSLEYGA) form a helical membrane-spanning segment. At 80–99 (KHNLGKIGHGIRIWNEIDPE) the chain is on the extracellular side. The helical transmembrane segment at 100–120 (LLLAVFLPALLFESSFSMEVH) threads the bilayer. Residues 121–127 (QIKRCLG) are Cytoplasmic-facing. A helical transmembrane segment spans residues 128–148 (QMVLLAVPGVLISTACLGSLV). Residues 149-159 (KVTFPYEWDWK) lie on the Extracellular side of the membrane. The chain crosses the membrane as a helical span at residues 160 to 180 (TSLLLGGLLSATDPVAVVALL). Over 181–191 (KELGASKKLST) the chain is Cytoplasmic. Residues 192–212 (IIEGESLMNDGTAIVVFQLFL) traverse the membrane as a helical segment. Over 213 to 227 (KMAMGQNSDWSSIIK) the chain is Extracellular. The helical transmembrane segment at 228 to 250 (FLLKVALGAVGIGLAFGIASVIW) threads the bilayer. The Cytoplasmic portion of the chain corresponds to 251–253 (LKF). Residues 254–273 (IFNDTVIEITLTIAVSYFAY) traverse the membrane as a helical segment. The Extracellular segment spans residues 274-278 (YTAQE). The helical transmembrane segment at 279–299 (WAGASGVLTVMTLGMFYAAFA) threads the bilayer. Over 300 to 313 (RTAFKGDSQKSLHH) the chain is Cytoplasmic. The helical transmembrane segment at 314–334 (FWEMVAYIANTLIFILSGVVI) threads the bilayer. Topologically, residues 335–352 (AEGILDSDKIAYQGNSWR) are extracellular. A helical transmembrane segment spans residues 353–373 (FLFLLYVYIQLSRVVVVGVLY). The Cytoplasmic portion of the chain corresponds to 374–387 (PLLCRFGYGLDWKE). Residues 388–408 (SIILVWSGLRGAVALALSLSV) traverse the membrane as a helical segment. Over 409–420 (KQSSGNSHISKE) the chain is Extracellular. The helical transmembrane segment at 421–441 (TGTLFLFFTGGIVFLTLIVNG) threads the bilayer. At 442-1146 (STTQFVLRLL…PSKIVFRNDL (705 aa)) the chain is on the cytoplasmic side. Disordered regions lie at residues 981-1001 (LHRR…QLQR) and 1102-1128 (CQLP…DEDE). Low complexity predominate over residues 986–996 (SSLTPPRSSSS). Residues 1109–1118 (ESSTRQNTMV) are compositionally biased toward polar residues.

Belongs to the monovalent cation:proton antiporter 1 (CPA1) transporter (TC 2.A.36) family. Interacts with CIPK24/SOS2 and CBL4/SOS3. Phosphorylated by CIPK24/SOS2 in complex with CBL4/SOS3. More expressed in roots than in shoots. Mostly localized in parenchyma cells at the xylem/symplast boundary in roots, hypocotyls, stems and leaves. Also present in root tips epidermal cells.

It is found in the cell membrane. It catalyses the reaction Na(+)(in) + H(+)(out) = Na(+)(out) + H(+)(in). The catalysed reaction is K(+)(in) + H(+)(out) = K(+)(out) + H(+)(in). In terms of biological role, acts in electroneutral exchange of protons for cations such as Na(+) or Li(+) across plasma membrane. Involved in Na(+) and K(+) homeostasis. Required for cytoplasmic Na(+) and Li(+) detoxification by secreting them from the cytoplasm to the extracellular space. Regulates Na(+) content of the xylem sap. The protein is Sodium/hydrogen exchanger 7 (NHX7) of Arabidopsis thaliana (Mouse-ear cress).